The following is a 1274-amino-acid chain: Meiosis inhibitor protein 1 (1274 aa).

In terms of tissue distribution, expressed predominantly in testis. Weakly expressed in spleen and thymus. Expressed in the ovaries, Fallopian tubes and uterus.

Functionally, required for normal meiotic chromosome synapsis. May be involved in the formation of meiotic double-strand breaks (DSBs) in spermatocytes. In Homo sapiens (Human), this protein is Meiosis inhibitor protein 1.